Here is a 337-residue protein sequence, read N- to C-terminus: DNA-directed RNA polymerase subunit alpha (337 aa).

The interval 1–233 (MVREEVAGST…DLFLPFLHTE (233 aa)) is alpha N-terminal domain (alpha-NTD). Residues 267 to 337 (IPLNCIFIDQ…LPMDLPKNKF (71 aa)) form an alpha C-terminal domain (alpha-CTD) region.

It belongs to the RNA polymerase alpha chain family. In plastids the minimal PEP RNA polymerase catalytic core is composed of four subunits: alpha, beta, beta', and beta''. When a (nuclear-encoded) sigma factor is associated with the core the holoenzyme is formed, which can initiate transcription.

It localises to the plastid. Its subcellular location is the chloroplast. It catalyses the reaction RNA(n) + a ribonucleoside 5'-triphosphate = RNA(n+1) + diphosphate. In terms of biological role, DNA-dependent RNA polymerase catalyzes the transcription of DNA into RNA using the four ribonucleoside triphosphates as substrates. The polypeptide is DNA-directed RNA polymerase subunit alpha (Oryza nivara (Indian wild rice)).